The sequence spans 59 residues: Zinc finger protein HVO_2753 (59 aa).

4 consecutive short sequence motifs (c(P)XCG motif) follow at residues 12 to 16 (CVSCG), 29 to 33 (CPDCG), 39 to 43 (CSKCR), and 51 to 55 (CPDCG). Residues C29 and C32 each coordinate Zn(2+). Zn(2+) is bound by residues C51 and C54.

As to quaternary structure, monomer in solution.

Its function is as follows. Zinc-binding protein that binds only one zinc ion. Is required for swarming and biofilm formation. The sequence is that of Zinc finger protein HVO_2753 from Haloferax volcanii (strain ATCC 29605 / DSM 3757 / JCM 8879 / NBRC 14742 / NCIMB 2012 / VKM B-1768 / DS2) (Halobacterium volcanii).